A 67-amino-acid polypeptide reads, in one-letter code: MPKMKTKSSAKKRFKLTGTGKVKGNVAFKRHCLSAKSQKMKRQARGTFMLFKTDSDNVKKYFLPNGG.

Belongs to the bacterial ribosomal protein bL35 family.

The protein is Large ribosomal subunit protein bL35 of Paramagnetospirillum magneticum (strain ATCC 700264 / AMB-1) (Magnetospirillum magneticum).